We begin with the raw amino-acid sequence, 337 residues long: tRNA dimethylallyltransferase (337 aa).

24 to 31 (GPTGAGKT) contributes to the ATP binding site. Residue 26–31 (TGAGKT) participates in substrate binding. 2 interaction with substrate tRNA regions span residues 49–52 (DSRQ) and 188–192 (QRAVR).

Belongs to the IPP transferase family. Monomer. The cofactor is Mg(2+).

It catalyses the reaction adenosine(37) in tRNA + dimethylallyl diphosphate = N(6)-dimethylallyladenosine(37) in tRNA + diphosphate. In terms of biological role, catalyzes the transfer of a dimethylallyl group onto the adenine at position 37 in tRNAs that read codons beginning with uridine, leading to the formation of N6-(dimethylallyl)adenosine (i(6)A). This is tRNA dimethylallyltransferase from Nitratidesulfovibrio vulgaris (strain DSM 19637 / Miyazaki F) (Desulfovibrio vulgaris).